The following is a 148-amino-acid chain: Inner membrane protein YccF (148 aa).

Over 1 to 14 the chain is Periplasmic; that stretch reads MRTVLNILNFVLGG. The helical transmembrane segment at 15–37 threads the bilayer; it reads FATTLGWLLATLVSIVLIFTLPL. Residues 38 to 76 lie on the Cytoplasmic side of the membrane; it reads TRSCWEITKLSLVPYGNEAIHVDELNPAGKNVLLNTGGT. A helical membrane pass occupies residues 77-99; that stretch reads VLNIFWLIFFGWWLCLMHIATGI. Residues 100–102 are Periplasmic-facing; the sequence is AQC. The helical transmembrane segment at 103–125 threads the bilayer; it reads ISIIGIPVGIANFKIAAIALWPV. The Cytoplasmic portion of the chain corresponds to 126–148; the sequence is GRRVVSVETAQAAREANARRRFE.

The protein localises to the cell inner membrane. This Escherichia coli (strain K12) protein is Inner membrane protein YccF (yccF).